The following is a 333-amino-acid chain: CMP-N-acetylneuraminate-beta-galactosamide-alpha-2,3-sialyltransferase 4 (333 aa).

At 1 to 8 (MTSKSHWK) the chain is on the cytoplasmic side. A helical; Signal-anchor for type II membrane protein transmembrane segment spans residues 9 to 26 (LLALALVLVVVMVWYSIS). At 27 to 333 (REDRYIEFFY…MGAVKNLTYF (307 aa)) the chain is on the lumenal side. Asparagine 61, asparagine 131, asparagine 310, and asparagine 329 each carry an N-linked (GlcNAc...) asparagine glycan. Cysteine 120 and cysteine 273 are joined by a disulfide.

It belongs to the glycosyltransferase 29 family. As to expression, broadly expressed among tissues with highest levels in the small intestine and colon.

It is found in the golgi apparatus. It localises to the golgi stack membrane. It carries out the reaction a beta-D-galactosyl-(1-&gt;3)-N-acetyl-beta-D-galactosaminyl derivative + CMP-N-acetyl-beta-neuraminate = an N-acetyl-alpha-neuraminyl-(2-&gt;3)-beta-D-galactosyl-(1-&gt;3)-N-acetyl-beta-D-galactosaminyl derivative + CMP + H(+). It catalyses the reaction a beta-D-galactosyl-(1-&gt;3)-N-acetyl-alpha-D-galactosaminyl derivative + CMP-N-acetyl-beta-neuraminate = an N-acetyl-alpha-neuraminyl-(2-&gt;3)-beta-D-galactosyl-(1-&gt;3)-N-acetyl-alpha-D-galactosaminyl derivative + CMP + H(+). The catalysed reaction is a beta-D-galactosyl-(1-&gt;4)-N-acetyl-beta-D-glucosaminyl derivative + CMP-N-acetyl-beta-neuraminate = an N-acetyl-alpha-neuraminyl-(2-&gt;3)-beta-D-galactosyl-(1-&gt;4)-N-acetyl-beta-D-glucosaminyl derivative + CMP + H(+). The enzyme catalyses a ganglioside GM1 (d18:1(4E)) + CMP-N-acetyl-beta-neuraminate = a ganglioside GD1a (d18:1(4E)) + CMP + H(+). It carries out the reaction a ganglioside GA1 (d18:1(4E)) + CMP-N-acetyl-beta-neuraminate = a ganglioside GM1b (d18:1(4E)) + CMP + H(+). It catalyses the reaction a ganglioside GT1c (d18:1(4E)) + CMP-N-acetyl-beta-neuraminate = a ganglioside GQ1c (d18:1(4E)) + CMP + H(+). The catalysed reaction is a neolactoside nLc4Cer + CMP-N-acetyl-beta-neuraminate = a neolactoside IV(3)-alpha-NeuAc-nLc4Cer + CMP + H(+). The enzyme catalyses a neolactoside nLc4Cer(d18:1(4E)) + CMP-N-acetyl-beta-neuraminate = a neolactoside IV(3)-alpha-NeuAc-nLc4Cer(d18:1(4E)) + CMP + H(+). It participates in protein modification; protein glycosylation. Its function is as follows. A beta-galactoside alpha2-3 sialyltransferase involved in terminal sialylation of glycoproteins and glycolipids. Catalyzes the transfer of sialic acid (N-acetyl-neuraminic acid; Neu5Ac) from the nucleotide sugar donor CMP-Neu5Ac onto acceptor Galbeta-(1-&gt;3)-GalNAc- and Galbeta-(1-&gt;4)-GlcNAc-terminated glycoconjugates through an alpha2-3 linkage. Plays a major role in hemostasis. Responsible for sialylation of plasma VWF/von Willebrand factor, preventing its recognition by asialoglycoprotein receptors (ASGPR) and subsequent clearance. Regulates ASGPR-mediated clearance of platelets. Participates in the biosynthesis of the sialyl Lewis X epitopes, both on O- and N-glycans, which are recognized by SELE/E-selectin, SELP/P-selectin and SELL/L-selectin. Essential for selectin-mediated rolling and adhesion of leukocytes during extravasation. Contributes to adhesion and transendothelial migration of neutrophils likely through terminal sialylation of CXCR2. In glycosphingolipid biosynthesis, sialylates GM1 and GA1 gangliosides to form GD1a and GM1b, respectively. Metabolizes brain c-series ganglioside GT1c forming GQ1c. Synthesizes ganglioside LM1 (IV3Neu5Ac-nLc4Cer), a major structural component of peripheral nerve myelin. The chain is CMP-N-acetylneuraminate-beta-galactosamide-alpha-2,3-sialyltransferase 4 (St3gal4) from Mus musculus (Mouse).